Consider the following 224-residue polypeptide: NBPF family member NBPF6-like protein (224 aa).

An Olduvai domain is found at 159-224; sequence ENHHDRKDEE…ASVCDVQDQL (66 aa). The span at 198 to 209 shows a compositional bias: basic and acidic residues; it reads YLTHSSHHDSHR. Positions 198–224 are disordered; that stretch reads YLTHSSHHDSHRPPSSIASVCDVQDQL.

This sequence belongs to the NBPF family.

In Bos taurus (Bovine), this protein is NBPF family member NBPF6-like protein.